A 408-amino-acid chain; its full sequence is Histidine--tRNA ligase (408 aa).

It belongs to the class-II aminoacyl-tRNA synthetase family. As to quaternary structure, homodimer.

The protein localises to the cytoplasm. The catalysed reaction is tRNA(His) + L-histidine + ATP = L-histidyl-tRNA(His) + AMP + diphosphate + H(+). The polypeptide is Histidine--tRNA ligase (Wolbachia pipientis wMel).